Consider the following 232-residue polypeptide: Small ribosomal subunit protein uS3 (232 aa).

The 69-residue stretch at 39-107 folds into the KH type-2 domain; that stretch reads VRQFLTKELS…PAQINIAEVR (69 aa).

Belongs to the universal ribosomal protein uS3 family. In terms of assembly, part of the 30S ribosomal subunit. Forms a tight complex with proteins S10 and S14.

In terms of biological role, binds the lower part of the 30S subunit head. Binds mRNA in the 70S ribosome, positioning it for translation. The chain is Small ribosomal subunit protein uS3 from Sodalis glossinidius (strain morsitans).